A 621-amino-acid chain; its full sequence is Chaperone protein HscA homolog (621 aa).

The protein belongs to the heat shock protein 70 family.

Functionally, chaperone involved in the maturation of iron-sulfur cluster-containing proteins. Has a low intrinsic ATPase activity which is markedly stimulated by HscB. This is Chaperone protein HscA homolog from Polynucleobacter asymbioticus (strain DSM 18221 / CIP 109841 / QLW-P1DMWA-1) (Polynucleobacter necessarius subsp. asymbioticus).